Here is a 165-residue protein sequence, read N- to C-terminus: Peptidyl-prolyl cis-trans isomerase A (165 aa).

Residue methionine 1 is modified to N-acetylmethionine. The residue at position 2 (valine 2) is an N-acetylvaline; in Peptidyl-prolyl cis-trans isomerase A, N-terminally processed. The 157-residue stretch at 7–163 folds into the PPIase cyclophilin-type domain; that stretch reads FFDIAVDGEP…KKITIADCGQ (157 aa). Lysine 28 is subject to N6-acetyllysine; alternate. Residue lysine 28 forms a Glycyl lysine isopeptide (Lys-Gly) (interchain with G-Cter in SUMO2); alternate linkage. Lysine 28 participates in a covalent cross-link: Glycyl lysine isopeptide (Lys-Gly) (interchain with G-Cter in ubiquitin); alternate. N6-acetyllysine is present on residues lysine 44 and lysine 76. Serine 77 is subject to Phosphoserine. Position 82 is an N6-acetyllysine; alternate (lysine 82). Residue lysine 82 forms a Glycyl lysine isopeptide (Lys-Gly) (interchain with G-Cter in SUMO2); alternate linkage. Threonine 93 bears the Phosphothreonine mark. N-linked (GlcNAc...) asparagine glycosylation occurs at asparagine 108. 3 positions are modified to N6-acetyllysine: lysine 125, lysine 131, and lysine 133.

It belongs to the cyclophilin-type PPIase family. PPIase A subfamily. As to quaternary structure, interacts with protein phosphatase PPP3CA/calcineurin A. Interacts with isoform 2 of BSG/CD147. Interacts with FOXO1; the interaction promotes FOXO1 dephosphorylation, nuclear accumulation and transcriptional activity. Interacts with integrin ITGA2B:ITGB3; the interaction is ROS and peptidyl-prolyl cis-trans isomerase (PPIase) activity-dependent and is increased in the presence of thrombin. Interacts with MAP3K5. Interacts with TARDBP; the interaction is dependent on the RNA-binding activity of TARDBP and the PPIase activity of PPIA/CYPA and the acetylation of PPIA/CYPA at Lys-125 favors the interaction. Interacts with HNRNPA1, HNRNPA2B1, HNRNPC, RBMX, HNRNPK and HNRNPM. Post-translationally, acetylation at Lys-125 markedly inhibits catalysis of cis to trans isomerization. PPIA acetylation also antagonizes the immunosuppressive effects of cyclosporine by inhibiting the sequential steps of cyclosporine binding and calcineurin inhibition. Acetylation at Lys-125 favors the interaction with TARDBP.

Its subcellular location is the cytoplasm. It is found in the secreted. The protein resides in the nucleus. The enzyme catalyses [protein]-peptidylproline (omega=180) = [protein]-peptidylproline (omega=0). With respect to regulation, binds cyclosporin A (CsA). CsA mediates some of its effects via an inhibitory action on PPIase. Catalyzes the cis-trans isomerization of proline imidic peptide bonds in oligopeptides. Exerts a strong chemotactic effect on leukocytes partly through activation of one of its membrane receptors BSG/CD147, initiating a signaling cascade that culminates in MAPK/ERK activation. Activates endothelial cells (ECs) in a proinflammatory manner by stimulating activation of NF-kappa-B and ERK, JNK and p38 MAP-kinases and by inducing expression of adhesion molecules including SELE and VCAM1. Induces apoptosis in ECs by promoting the FOXO1-dependent expression of CCL2 and BCL2L11 which are involved in EC chemotaxis and apoptosis. In response to oxidative stress, initiates proapoptotic and antiapoptotic signaling in ECs via activation of NF-kappa-B and AKT1 and up-regulation of antiapoptotic protein BCL2. Negatively regulates MAP3K5/ASK1 kinase activity, autophosphorylation and oxidative stress-induced apoptosis mediated by MAP3K5/ASK1. Necessary for the assembly of TARDBP in heterogeneous nuclear ribonucleoprotein (hnRNP) complexes and regulates TARDBP binding to RNA UG repeats and TARDBP-dependent expression of HDAC6, ATG7 and VCP which are involved in clearance of protein aggregates. Plays an important role in platelet activation and aggregation. Regulates calcium mobilization and integrin ITGA2B:ITGB3 bidirectional signaling via increased ROS production as well as by facilitating the interaction between integrin and the cell cytoskeleton. Binds heparan sulfate glycosaminoglycans. In Symphalangus syndactylus (Siamang), this protein is Peptidyl-prolyl cis-trans isomerase A (PPIA).